Here is a 400-residue protein sequence, read N- to C-terminus: Elongation factor Tu (400 aa).

One can recognise a tr-type G domain in the interval 10–208; that stretch reads KPHLNVGTIG…TMDEYFPEPQ (199 aa). The interval 19–26 is G1; that stretch reads GHIDHGKT. Residue 19–26 participates in GTP binding; that stretch reads GHIDHGKT. Thr26 lines the Mg(2+) pocket. A G2 region spans residues 60-64; it reads GITIN. A G3 region spans residues 81–84; that stretch reads DCPG. GTP contacts are provided by residues 81 to 85 and 136 to 139; these read DCPGH and NKTD. The segment at 136 to 139 is G4; it reads NKTD. A G5 region spans residues 174-176; sequence SAL.

Belongs to the TRAFAC class translation factor GTPase superfamily. Classic translation factor GTPase family. EF-Tu/EF-1A subfamily. In terms of assembly, monomer.

The protein resides in the cytoplasm. The enzyme catalyses GTP + H2O = GDP + phosphate + H(+). Its function is as follows. GTP hydrolase that promotes the GTP-dependent binding of aminoacyl-tRNA to the A-site of ribosomes during protein biosynthesis. The polypeptide is Elongation factor Tu (Thermosipho melanesiensis (strain DSM 12029 / CIP 104789 / BI429)).